Consider the following 416-residue polypeptide: Na(+)/H(+) antiporter NhaA (416 aa).

Helical transmembrane passes span 18 to 38 (VGGA…NSPW), 59 to 79 (LTLA…VAGL), 97 to 117 (ALPI…AAVI), 127 to 147 (GWAI…ALTG), 167 to 187 (LLAI…LWLL), 265 to 285 (GICV…ATVF), 297 to 317 (VMLG…WVAI), 333 to 353 (MFAL…VAEL), and 363 to 383 (LAKA…SALL). The segment at 396–416 (ALELQPDEGDASDPSEGGSLR) is disordered.

Belongs to the NhaA Na(+)/H(+) (TC 2.A.33) antiporter family.

It localises to the cell membrane. It carries out the reaction Na(+)(in) + 2 H(+)(out) = Na(+)(out) + 2 H(+)(in). Its function is as follows. Na(+)/H(+) antiporter that extrudes sodium in exchange for external protons. The polypeptide is Na(+)/H(+) antiporter NhaA (Nocardia farcinica (strain IFM 10152)).